We begin with the raw amino-acid sequence, 104 residues long: L-rhamnose mutarotase (104 aa).

Y18 contributes to the substrate binding site. H22 functions as the Proton donor in the catalytic mechanism. Substrate-binding positions include Y41 and 76–77 (WW).

Belongs to the rhamnose mutarotase family. Homodimer.

It localises to the cytoplasm. The enzyme catalyses alpha-L-rhamnose = beta-L-rhamnose. It functions in the pathway carbohydrate metabolism; L-rhamnose metabolism. In terms of biological role, involved in the anomeric conversion of L-rhamnose. The sequence is that of L-rhamnose mutarotase from Burkholderia cenocepacia (strain HI2424).